The sequence spans 131 residues: Transcription antitermination protein NusB (131 aa).

Belongs to the NusB family.

Functionally, involved in transcription antitermination. Required for transcription of ribosomal RNA (rRNA) genes. Binds specifically to the boxA antiterminator sequence of the ribosomal RNA (rrn) operons. The protein is Transcription antitermination protein NusB of Campylobacter hominis (strain ATCC BAA-381 / DSM 21671 / CCUG 45161 / LMG 19568 / NCTC 13146 / CH001A).